The following is a 782-amino-acid chain: MASKSDKQVTVEVNNNGRSRSKSRARSQSRGRGRSVKITVNSHNKGRRQNGRNKYQSNQRVRKIVNKQLRKQGVTGPKPAICQTATATLGTIGSNTTGATEIEACILLNPVLVKDATGSTQFGPVQALGAQYSMWKLKYLNVRLTSMVGASAVNGTVVRISLNPTSTPSSTSWSGLGARKHLDVTVGKNAVFKLKPSDLGGPRDGWWLTNTNDNASDTLGPSIEIHTLGQTMSSYQNTQFTGGLFLVELSSAWCFTGYAANPNLVNLVKSTDKSVNVTFEGSAGTPLIMNVPEHSHFARTAVEHSSLSTSLSRAGGESSSDTVWQVLNTAVSAAELVTPPPFNWLVKGGWWFVKLIAGRARTGARRFYVYLSYQDALSNKPALCTGGVPASARQSNPVRTTLQFTQMNQPSLGHGATPMTFGRSIPEPGEQFRVLLTVGPPMAPNTANSQNWVNKTIVPPENQYTVKIGIDLEHYTTMQGFTPVESVSWYTADFQPSDEPSPIPGLYARVNNTKKADVYGVQQFKSSHTNNRHQITSVFLVRVTTSFQVINYTSYFIRGAESGSNVSNLKIRDQTYHTPLQFTQGKWYLLTSTVMHDGPTSSGWVWMNQELTNNIAYRVDPGMMYLITPPPAASQLYFELHTVLPQARSEEPETYVDAPLPEEPPIEEEETDSDFESTEDENDEVDRFDLHPSSESDDDDVENDRATLLSTLLNQGISVERATRITNGAFPTRAARVRRSVYNDLLVSGLSPGAAWSHACEQARRAGDNHDLQLSGSRDHAE.

The tract at residues 1-59 (MASKSDKQVTVEVNNNGRSRSKSRARSQSRGRGRSVKITVNSHNKGRRQNGRNKYQSNQ) is disordered. Residues 1–70 (MASKSDKQVT…VRKIVNKQLR (70 aa)) form a basic region. A compositionally biased stretch (basic residues) spans 19-35 (SRSKSRARSQSRGRGRS). The tract at residues 71 to 263 (KQGVTGPKPA…CFTGYAANPN (193 aa)) is inner core. A lipid disruption activity region spans residues 274-313 (SVNVTFEGSAGTPLIMNVPEHSHFARTAVEHSSLSTSLSR). Positions 394–423 (QSNPVRTTLQFTQMNQPSLGHGATPMTFGR) are core attachment. The interval 424–648 (SIPEPGEQFR…ELHTVLPQAR (225 aa)) is P2 globular domain. Positions 648–702 (RSEEPETYVDAPLPEEPPIEEEETDSDFESTEDENDEVDRFDLHPSSESDDDDVE) are disordered. Residues 649–782 (SEEPETYVDA…QLSGSRDHAE (134 aa)) are acidic. The segment covering 664 to 684 (PPIEEEETDSDFESTEDENDE) has biased composition (acidic residues). Positions 685–694 (VDRFDLHPSS) are enriched in basic and acidic residues.

The protein belongs to the astroviridae capsid polyprotein family. Heterodimer with spike protein VP25. The spikes form a globular dimer with 30 spikes covering the mature virion. Spike protein VP25 that lacks the core attachment region may need to dimerize with spike protein VP27 to remain stably bound to the viral particle. In terms of assembly, heterodimer with spike protein VP27. The spikes form a globular dimer with 30 spikes covering the mature virion. Spike protein VP25 that lacks the core attachment region may need to dimerize with spike protein VP27 to remain stably bound to the viral particle. Interacts with host PDIA4; this interaction seems to facilitate the uncoating during virus entry into the host cell. Post-translationally, specific enzymatic cleavages by the host yield mature proteins. VP90 acidic C-terminal domain is eliminated from the immature virion by host caspases during viral maturation giving rise to virions composed of VP70. The virus can then dissociate from cellular membranes and exit the cell. Further cleavages by host extracellular proteases occur resulting in the three structural proteins VP34, VP27 and VP25 and conferring infectivity.

It localises to the virion. The protein resides in the host extracellular space. The capsid polyprotein VP90 self-assembles and undergoes a proteolytic cleavage by host caspases to yield the immature VP70 virion. Functionally, the immature virion is composed of 180 VP70 subunits with 90 dimeric spikes and displays a T=3 icosahedral symmetry. During maturation, VP70 undergoes a loss of 60 peripentonal spikes, which likely plays an important role in viral infectivity. In terms of biological role, self-assembles to form an icosahedral capsid with a T=3 symmetry, about 43 nm in diameter. This forms contains only 30 spikes located on the icosahedral 2-fold axes. Its function is as follows. VP25 and VP27 Forms the spikes at the surface of the virion. This forms contains only 30 spikes located on the icosahedral 2-fold axes. Plays a role in the attachment to target host cell. This attachment induces virion internalization through clathrin-dependent endocytosis. VP25 and VP27 Forms the spikes at the surface of the virion. This forms contains only 30 spikes located on the icosahedral 2-fold axes. Plays a role in the attachment to target host cell. This attachment induces virion internalization through clathrin-dependent endocytosis. This Human astrovirus-8 (HAstV-8) protein is Capsid polyprotein VP90.